We begin with the raw amino-acid sequence, 115 residues long: Large ribosomal subunit protein bL20 (115 aa).

It belongs to the bacterial ribosomal protein bL20 family.

In terms of biological role, binds directly to 23S ribosomal RNA and is necessary for the in vitro assembly process of the 50S ribosomal subunit. It is not involved in the protein synthesizing functions of that subunit. This is Large ribosomal subunit protein bL20 from Chlorobium chlorochromatii (strain CaD3).